Here is a 95-residue protein sequence, read N- to C-terminus: Pyruvate synthase subunit PorD (95 aa).

4Fe-4S ferredoxin-type domains follow at residues 34 to 63 (FRPV…PREN) and 64 to 93 (GFFE…MILE). Positions 43, 46, 49, 53, 73, 76, 79, and 83 each coordinate [4Fe-4S] cluster.

As to quaternary structure, heterotetramer of one alpha, one beta, one delta and one gamma chain. Requires [4Fe-4S] cluster as cofactor.

This chain is Pyruvate synthase subunit PorD (porD), found in Methanosarcina barkeri (strain Fusaro / DSM 804).